The chain runs to 435 residues: C4-dicarboxylate transport protein (435 aa).

The next 9 helical transmembrane spans lie at 4–24 (SLFKSLYFQVLTAIAIGILLG), 44–64 (LIKMIIAPVIFCTVVTGIAGM), 76–96 (VALLYFEIVSTIALIIGLIIV), 142–162 (IGAFASGNILQVLLFAVLFGF), 184–204 (VIFGIINMIMRLAPIGAFGAM), 222–242 (LIICFYITCILFVVVVLGTIA), 289–309 (VVGLVIPTGYSFNLDGTSIYL), 326–346 (IFHQITLLVVLLLSSKGVAGV), and 352–372 (IVLAATISAVGHLPVAGLALI).

The protein belongs to the dicarboxylate/amino acid:cation symporter (DAACS) (TC 2.A.23) family.

The protein localises to the cell inner membrane. Functionally, responsible for the transport of dicarboxylates such as succinate, fumarate, and malate from the periplasm across the membrane. In Salmonella paratyphi A (strain ATCC 9150 / SARB42), this protein is C4-dicarboxylate transport protein.